We begin with the raw amino-acid sequence, 392 residues long: MLLSLAQWLQTISPELGFLRVFQYLTFRALMAAMTALLIGLLAGPFVIRRLISLKIGQPIREYAMQTHLSKSGTPTMGGVLILLAIGISTLLWFDLSNRFVWIVLLVTLGFGAIGWVDDWRKVVLKDPEGMRSREKYLWQSVVGLIAALYLVFSISESSNLRVLELFMNWVRSGLDVNLPPKAGLLVPFMKEISYPLGVFGFVILTYLVIVGSSNAVNLTDGLDGLAIMPVVMVGSSLGVFAYVTGSSVYSKYLLFPHIPGSGELLIFCAAMAGSGLAFLWFNTHPAQVFMGDVGALALGAALGTIAVIVRQEIVLAIMGGIFVVEALSVMLQVTWFKYTKRRYGQGRRLFQMAPLHHHFEKCGWKETQVVVRFWIITMLLCLVGLSTLKLR.

10 helical membrane-spanning segments follow: residues 28–48 (RALMAAMTALLIGLLAGPFVI), 76–96 (TMGGVLILLAIGISTLLWFDL), 100–120 (FVWIVLLVTLGFGAIGWVDDW), 137–157 (YLWQSVVGLIAALYLVFSISE), 193–213 (ISYPLGVFGFVILTYLVIVGS), 225–245 (GLAIMPVVMVGSSLGVFAYVT), 262–282 (SGELLIFCAAMAGSGLAFLWF), 289–309 (VFMGDVGALALGAALGTIAVI), 314–334 (IVLAIMGGIFVVEALSVMLQV), and 369–389 (QVVVRFWIITMLLCLVGLSTL).

This sequence belongs to the glycosyltransferase 4 family. MraY subfamily. It depends on Mg(2+) as a cofactor.

The protein resides in the cell inner membrane. It carries out the reaction UDP-N-acetyl-alpha-D-muramoyl-L-alanyl-gamma-D-glutamyl-meso-2,6-diaminopimeloyl-D-alanyl-D-alanine + di-trans,octa-cis-undecaprenyl phosphate = di-trans,octa-cis-undecaprenyl diphospho-N-acetyl-alpha-D-muramoyl-L-alanyl-D-glutamyl-meso-2,6-diaminopimeloyl-D-alanyl-D-alanine + UMP. The protein operates within cell wall biogenesis; peptidoglycan biosynthesis. Its function is as follows. Catalyzes the initial step of the lipid cycle reactions in the biosynthesis of the cell wall peptidoglycan: transfers peptidoglycan precursor phospho-MurNAc-pentapeptide from UDP-MurNAc-pentapeptide onto the lipid carrier undecaprenyl phosphate, yielding undecaprenyl-pyrophosphoryl-MurNAc-pentapeptide, known as lipid I. The protein is Phospho-N-acetylmuramoyl-pentapeptide-transferase of Polaromonas naphthalenivorans (strain CJ2).